Here is a 254-residue protein sequence, read N- to C-terminus: uncharacterized protein (254 aa).

The interval 163-182 (PNKHTQHKRSTRRTSPKDYN) is disordered. Basic residues predominate over residues 166–176 (HTQHKRSTRRT). A helical membrane pass occupies residues 207-227 (AHSAWILIIIIIIIVVILFFF).

This sequence belongs to the RL11 family.

The protein resides in the host membrane. This is an uncharacterized protein from Human cytomegalovirus (strain Merlin) (HHV-5).